A 207-amino-acid chain; its full sequence is LPS-assembly lipoprotein LptE (207 aa).

Positions 1-19 are cleaved as a signal peptide; it reads MRHRILMLLLGLAVLVTAG. A lipid anchor (N-palmitoyl cysteine) is attached at cysteine 20. Cysteine 20 is lipidated: S-diacylglycerol cysteine.

It belongs to the LptE lipoprotein family. Component of the lipopolysaccharide transport and assembly complex. Interacts with LptD.

It is found in the cell outer membrane. Its function is as follows. Together with LptD, is involved in the assembly of lipopolysaccharide (LPS) at the surface of the outer membrane. Required for the proper assembly of LptD. Binds LPS and may serve as the LPS recognition site at the outer membrane. The chain is LPS-assembly lipoprotein LptE from Yersinia enterocolitica serotype O:8 / biotype 1B (strain NCTC 13174 / 8081).